A 247-amino-acid chain; its full sequence is UDP-2,3-diacylglucosamine hydrolase (247 aa).

The Mn(2+) site is built by Asp-8, His-10, Asp-41, Asn-79, and His-115. 79-80 (NH) serves as a coordination point for substrate. Residues Asp-123, Lys-165, Lys-168, and His-196 each contribute to the substrate site. Residues His-196 and His-198 each coordinate Mn(2+).

The protein belongs to the LpxH family. The cofactor is Mn(2+).

It is found in the cell inner membrane. It carries out the reaction UDP-2-N,3-O-bis[(3R)-3-hydroxytetradecanoyl]-alpha-D-glucosamine + H2O = 2-N,3-O-bis[(3R)-3-hydroxytetradecanoyl]-alpha-D-glucosaminyl 1-phosphate + UMP + 2 H(+). It functions in the pathway glycolipid biosynthesis; lipid IV(A) biosynthesis; lipid IV(A) from (3R)-3-hydroxytetradecanoyl-[acyl-carrier-protein] and UDP-N-acetyl-alpha-D-glucosamine: step 4/6. Functionally, hydrolyzes the pyrophosphate bond of UDP-2,3-diacylglucosamine to yield 2,3-diacylglucosamine 1-phosphate (lipid X) and UMP by catalyzing the attack of water at the alpha-P atom. Involved in the biosynthesis of lipid A, a phosphorylated glycolipid that anchors the lipopolysaccharide to the outer membrane of the cell. This is UDP-2,3-diacylglucosamine hydrolase from Blochmanniella floridana.